Reading from the N-terminus, the 221-residue chain is Eukaryotic translation initiation factor 3 subunit K (221 aa).

The PCI domain maps to 46-207 (YDLEANLACL…NIKTKHITEK (162 aa)).

This sequence belongs to the eIF-3 subunit K family. As to quaternary structure, component of the eukaryotic translation initiation factor 3 (eIF-3) complex.

The protein localises to the cytoplasm. Component of the eukaryotic translation initiation factor 3 (eIF-3) complex, which is involved in protein synthesis of a specialized repertoire of mRNAs and, together with other initiation factors, stimulates binding of mRNA and methionyl-tRNAi to the 40S ribosome. The eIF-3 complex specifically targets and initiates translation of a subset of mRNAs involved in cell proliferation. The protein is Eukaryotic translation initiation factor 3 subunit K of Culex quinquefasciatus (Southern house mosquito).